A 65-amino-acid polypeptide reads, in one-letter code: Putative beta-neurotoxin RjAa12 (65 aa).

Positions 1 to 64 (KEGYPVGRDG…VWDSSTNKCG (64 aa)) constitute an LCN-type CS-alpha/beta domain. 4 disulfides stabilise this stretch: Cys-11/Cys-63, Cys-15/Cys-37, Cys-22/Cys-44, and Cys-26/Cys-46.

This sequence belongs to the long (4 C-C) scorpion toxin superfamily. Sodium channel inhibitor family. Beta subfamily. In terms of tissue distribution, expressed by the venom gland.

The protein resides in the secreted. In terms of biological role, beta toxins bind voltage-independently at site-4 of sodium channels (Nav) and shift the voltage of activation toward more negative potentials thereby affecting sodium channel activation and promoting spontaneous and repetitive firing. The chain is Putative beta-neurotoxin RjAa12 from Rhopalurus junceus (Caribbean blue scorpion).